The primary structure comprises 248 residues: Adenosylcobinamide-GDP ribazoletransferase (248 aa).

The next 7 membrane-spanning stretches (helical) occupy residues 32-52 (FPLV…IGMV), 60-80 (ALLV…DGLA), 103-123 (AVGS…WIAL), 134-154 (WIVS…SVMT), 170-190 (AGGW…VLVM), 195-215 (LPIV…GMLA), and 227-247 (LGAS…LLLF).

The protein belongs to the CobS family. Requires Mg(2+) as cofactor.

Its subcellular location is the cell inner membrane. The catalysed reaction is alpha-ribazole + adenosylcob(III)inamide-GDP = adenosylcob(III)alamin + GMP + H(+). It catalyses the reaction alpha-ribazole 5'-phosphate + adenosylcob(III)inamide-GDP = adenosylcob(III)alamin 5'-phosphate + GMP + H(+). The protein operates within cofactor biosynthesis; adenosylcobalamin biosynthesis; adenosylcobalamin from cob(II)yrinate a,c-diamide: step 7/7. Joins adenosylcobinamide-GDP and alpha-ribazole to generate adenosylcobalamin (Ado-cobalamin). Also synthesizes adenosylcobalamin 5'-phosphate from adenosylcobinamide-GDP and alpha-ribazole 5'-phosphate. In Prosthecochloris aestuarii (strain DSM 271 / SK 413), this protein is Adenosylcobinamide-GDP ribazoletransferase.